The sequence spans 353 residues: Photosystem II D2 protein (353 aa).

Position 2 is an N-acetylthreonine (threonine 2). Threonine 2 carries the post-translational modification Phosphothreonine. Residues 41–61 traverse the membrane as a helical segment; it reads CAYFAIGGWFTGTTFVTSWYT. Histidine 118 contacts chlorophyll a. Residues 125-141 form a helical membrane-spanning segment; the sequence is GFMLRQFELARSVQLRP. 2 residues coordinate pheophytin a: glutamine 130 and asparagine 143. The helical transmembrane segment at 153-166 threads the bilayer; the sequence is VFVSVFLIYPLGQS. Histidine 198 provides a ligand contact to chlorophyll a. Residues 208–228 traverse the membrane as a helical segment; that stretch reads AALLCAIHGATVENTLFEDGD. A plastoquinone-binding residues include histidine 215 and phenylalanine 262. A Fe cation-binding site is contributed by histidine 215. Residue histidine 269 participates in Fe cation binding. A helical membrane pass occupies residues 279–295; it reads GLWMSALGVVGLALNLR.

It belongs to the reaction center PufL/M/PsbA/D family. In terms of assembly, PSII is composed of 1 copy each of membrane proteins PsbA, PsbB, PsbC, PsbD, PsbE, PsbF, PsbH, PsbI, PsbJ, PsbK, PsbL, PsbM, PsbT, PsbX, PsbY, PsbZ, Psb30/Ycf12, at least 3 peripheral proteins of the oxygen-evolving complex and a large number of cofactors. It forms dimeric complexes. Requires The D1/D2 heterodimer binds P680, chlorophylls that are the primary electron donor of PSII, and subsequent electron acceptors. It shares a non-heme iron and each subunit binds pheophytin, quinone, additional chlorophylls, carotenoids and lipids. There is also a Cl(-1) ion associated with D1 and D2, which is required for oxygen evolution. The PSII complex binds additional chlorophylls, carotenoids and specific lipids. as cofactor.

It is found in the plastid. The protein localises to the chloroplast thylakoid membrane. It carries out the reaction 2 a plastoquinone + 4 hnu + 2 H2O = 2 a plastoquinol + O2. In terms of biological role, photosystem II (PSII) is a light-driven water:plastoquinone oxidoreductase that uses light energy to abstract electrons from H(2)O, generating O(2) and a proton gradient subsequently used for ATP formation. It consists of a core antenna complex that captures photons, and an electron transfer chain that converts photonic excitation into a charge separation. The D1/D2 (PsbA/PsbD) reaction center heterodimer binds P680, the primary electron donor of PSII as well as several subsequent electron acceptors. D2 is needed for assembly of a stable PSII complex. The sequence is that of Photosystem II D2 protein from Carica papaya (Papaya).